Consider the following 479-residue polypeptide: Glutamate--tRNA ligase (479 aa).

Positions 9-19 (PSPTGNLHIGT) match the 'HIGH' region motif. A 'KMSKS' region motif is present at residues 243–247 (KLSKR). An ATP-binding site is contributed by K246.

This sequence belongs to the class-I aminoacyl-tRNA synthetase family. Glutamate--tRNA ligase type 1 subfamily. In terms of assembly, monomer.

It localises to the cytoplasm. It catalyses the reaction tRNA(Glu) + L-glutamate + ATP = L-glutamyl-tRNA(Glu) + AMP + diphosphate. In terms of biological role, catalyzes the attachment of glutamate to tRNA(Glu) in a two-step reaction: glutamate is first activated by ATP to form Glu-AMP and then transferred to the acceptor end of tRNA(Glu). This chain is Glutamate--tRNA ligase, found in Synechococcus sp. (strain JA-3-3Ab) (Cyanobacteria bacterium Yellowstone A-Prime).